A 309-amino-acid chain; its full sequence is RHOMBOID-like protein 5 (309 aa).

Helical transmembrane passes span 27–47 (IPVPWVAWLVPLILAANFVTF), 113–133 (IWLHGGFLHLMANMISLMCIG), 140–160 (FGFMRIGALYVISGLGGSLVS), 170–190 (VSVGASGALFGLLGAMLSELI), 200–220 (CTALMTLILIIVLNLSVGFLP), 222–242 (VDNSAHFGGFLAGFFLGFVLL), and 274–294 (IFRFTSLAILLAGFIAGYTKL). Ser-175 acts as the Nucleophile in catalysis. His-227 serves as the catalytic Charge relay system.

This sequence belongs to the peptidase S54 family.

It is found in the membrane. The enzyme catalyses Cleaves type-1 transmembrane domains using a catalytic dyad composed of serine and histidine that are contributed by different transmembrane domains.. Functionally, probable rhomboid-type serine protease that catalyzes intramembrane proteolysis. May function in reproductive organs maturation. This chain is RHOMBOID-like protein 5, found in Arabidopsis thaliana (Mouse-ear cress).